A 223-amino-acid polypeptide reads, in one-letter code: Deoxyribose-phosphate aldolase (223 aa).

Residue Asp-91 is the Proton donor/acceptor of the active site. Lys-154 (schiff-base intermediate with acetaldehyde) is an active-site residue. Residue Lys-183 is the Proton donor/acceptor of the active site.

The protein belongs to the DeoC/FbaB aldolase family. DeoC type 1 subfamily.

The protein localises to the cytoplasm. It catalyses the reaction 2-deoxy-D-ribose 5-phosphate = D-glyceraldehyde 3-phosphate + acetaldehyde. It participates in carbohydrate degradation; 2-deoxy-D-ribose 1-phosphate degradation; D-glyceraldehyde 3-phosphate and acetaldehyde from 2-deoxy-alpha-D-ribose 1-phosphate: step 2/2. Functionally, catalyzes a reversible aldol reaction between acetaldehyde and D-glyceraldehyde 3-phosphate to generate 2-deoxy-D-ribose 5-phosphate. This Geobacillus thermodenitrificans (strain NG80-2) protein is Deoxyribose-phosphate aldolase.